Here is a 34-residue protein sequence, read N- to C-terminus: MEVNILAFIATALFILVPTSFLLIIYVKTVSQNN.

Residues 5 to 25 (ILAFIATALFILVPTSFLLII) traverse the membrane as a helical segment.

It belongs to the PsbM family. In terms of assembly, PSII is composed of 1 copy each of membrane proteins PsbA, PsbB, PsbC, PsbD, PsbE, PsbF, PsbH, PsbI, PsbJ, PsbK, PsbL, PsbM, PsbT, PsbX, PsbY, PsbZ, Psb30/Ycf12, at least 3 peripheral proteins of the oxygen-evolving complex and a large number of cofactors. It forms dimeric complexes.

The protein resides in the plastid. Its subcellular location is the chloroplast thylakoid membrane. One of the components of the core complex of photosystem II (PSII). PSII is a light-driven water:plastoquinone oxidoreductase that uses light energy to abstract electrons from H(2)O, generating O(2) and a proton gradient subsequently used for ATP formation. It consists of a core antenna complex that captures photons, and an electron transfer chain that converts photonic excitation into a charge separation. This subunit is found at the monomer-monomer interface. This chain is Photosystem II reaction center protein M, found in Triticum aestivum (Wheat).